Here is a 361-residue protein sequence, read N- to C-terminus: Probable dual-specificity RNA methyltransferase RlmN (361 aa).

Glu99 acts as the Proton acceptor in catalysis. The region spanning 105 to 342 (GPNRMTACVS…VTIRKSYGTP (238 aa)) is the Radical SAM core domain. The cysteines at positions 112 and 347 are disulfide-linked. Cys119, Cys123, and Cys126 together coordinate [4Fe-4S] cluster. S-adenosyl-L-methionine contacts are provided by residues 171–172 (GE), Ser204, 227–229 (SLH), and Asn304. Cys347 acts as the S-methylcysteine intermediate in catalysis.

Belongs to the radical SAM superfamily. RlmN family. [4Fe-4S] cluster is required as a cofactor.

The protein localises to the cytoplasm. The catalysed reaction is adenosine(2503) in 23S rRNA + 2 reduced [2Fe-2S]-[ferredoxin] + 2 S-adenosyl-L-methionine = 2-methyladenosine(2503) in 23S rRNA + 5'-deoxyadenosine + L-methionine + 2 oxidized [2Fe-2S]-[ferredoxin] + S-adenosyl-L-homocysteine. The enzyme catalyses adenosine(37) in tRNA + 2 reduced [2Fe-2S]-[ferredoxin] + 2 S-adenosyl-L-methionine = 2-methyladenosine(37) in tRNA + 5'-deoxyadenosine + L-methionine + 2 oxidized [2Fe-2S]-[ferredoxin] + S-adenosyl-L-homocysteine. Specifically methylates position 2 of adenine 2503 in 23S rRNA and position 2 of adenine 37 in tRNAs. The protein is Probable dual-specificity RNA methyltransferase RlmN of Chlorobium luteolum (strain DSM 273 / BCRC 81028 / 2530) (Pelodictyon luteolum).